The primary structure comprises 196 residues: ATP-dependent Clp protease proteolytic subunit (196 aa).

Catalysis depends on serine 98, which acts as the Nucleophile. Residue histidine 123 is part of the active site.

This sequence belongs to the peptidase S14 family. In terms of assembly, fourteen ClpP subunits assemble into 2 heptameric rings which stack back to back to give a disk-like structure with a central cavity, resembling the structure of eukaryotic proteasomes.

It localises to the cytoplasm. It catalyses the reaction Hydrolysis of proteins to small peptides in the presence of ATP and magnesium. alpha-casein is the usual test substrate. In the absence of ATP, only oligopeptides shorter than five residues are hydrolyzed (such as succinyl-Leu-Tyr-|-NHMec, and Leu-Tyr-Leu-|-Tyr-Trp, in which cleavage of the -Tyr-|-Leu- and -Tyr-|-Trp bonds also occurs).. In terms of biological role, cleaves peptides in various proteins in a process that requires ATP hydrolysis. Has a chymotrypsin-like activity. Plays a major role in the degradation of misfolded proteins. The sequence is that of ATP-dependent Clp protease proteolytic subunit from Geobacillus sp. (strain WCH70).